A 504-amino-acid chain; its full sequence is Glycerol kinase (504 aa).

Thr13 is an ADP binding site. Thr13, Thr14, and Ser15 together coordinate ATP. Thr13 provides a ligand contact to sn-glycerol 3-phosphate. Arg17 serves as a coordination point for ADP. Residues Arg83, Glu84, and Tyr135 each coordinate sn-glycerol 3-phosphate. Glycerol-binding residues include Arg83, Glu84, and Tyr135. His231 is subject to Phosphohistidine; by HPr. Asp245 is a sn-glycerol 3-phosphate binding site. Glycerol is bound by residues Asp245 and Gln246. Thr267 and Gly310 together coordinate ADP. Residues Thr267, Gly310, Gln314, and Gly411 each contribute to the ATP site. ADP-binding residues include Gly411 and Asn415.

Belongs to the FGGY kinase family. As to quaternary structure, homotetramer and homodimer (in equilibrium). Post-translationally, the phosphoenolpyruvate-dependent sugar phosphotransferase system (PTS), including enzyme I, and histidine-containing protein (HPr) are required for the phosphorylation, which leads to the activation of the enzyme.

It carries out the reaction glycerol + ATP = sn-glycerol 3-phosphate + ADP + H(+). Its pathway is polyol metabolism; glycerol degradation via glycerol kinase pathway; sn-glycerol 3-phosphate from glycerol: step 1/1. With respect to regulation, activated by phosphorylation and inhibited by fructose 1,6-bisphosphate (FBP). Its function is as follows. Key enzyme in the regulation of glycerol uptake and metabolism. Catalyzes the phosphorylation of glycerol to yield sn-glycerol 3-phosphate. The sequence is that of Glycerol kinase from Pediococcus pentosaceus (strain ATCC 25745 / CCUG 21536 / LMG 10740 / 183-1w).